A 54-amino-acid chain; its full sequence is UPF0391 membrane protein Mpe_A2904 (54 aa).

2 helical membrane-spanning segments follow: residues 5 to 25 (AVVF…GIAA) and 30 to 50 (IAKI…LFGL).

It belongs to the UPF0391 family.

It is found in the cell membrane. This chain is UPF0391 membrane protein Mpe_A2904, found in Methylibium petroleiphilum (strain ATCC BAA-1232 / LMG 22953 / PM1).